A 441-amino-acid polypeptide reads, in one-letter code: MKFSITLALCFTLSIFLIGSQAKVPVDDQFRVVNEGGYTDYSPIEYNPDVRGFVPFSDNFRLCFYNTTPNAYTLALRIGNRVQESTLRWVWEANRGSPVKENATLTFGEDGNLVLAEADGRLVWQTNTANKGAVGIKILENGNMVIYDSSGKFVWQSFDSPTDTLLVGQSLKLNGRTKLVSRLSPSVNTNGPYSLVMEAKKLVLYYTTNKTPKPIAYFEYEFFTKITQFQSMTFQAVEDSDTTWGLVMEGVDSGSKFNVSTFLSRPKHNATLSFIRLESDGNIRVWSYSTLATSTAWDVTYTAFTNADTDGNDECRIPEHCLGFGLCKKGQCNACPSDKGLLGWDETCKSPSLASCDPKTFHYFKIEGADSFMTKYNGGSSTTESACGDKCTRDCKCLGFFYNRKSSRCWLGYELKTLTRTGDSSLVAYVKAPNANKKSTL.

An N-terminal signal peptide occupies residues 1–22 (MKFSITLALCFTLSIFLIGSQA). Residues 29 to 159 (QFRVVNEGGY…SGKFVWQSFD (131 aa)) form the Bulb-type lectin domain. Residues Asn102, Asn258, and Asn269 are each glycosylated (N-linked (GlcNAc...) asparagine). One copy of the WD repeat lies at 254 to 296 (GSKFNVSTFLSRPKHNATLSFIRLESDGNIRVWSYSTLATSTA). The PAN domain occupies 356-433 (CDPKTFHYFK…SSLVAYVKAP (78 aa)). 2 disulfides stabilise this stretch: Cys387/Cys409 and Cys391/Cys397.

In terms of processing, phosphorylated on tyrosine.

The protein localises to the secreted. It is found in the cell wall. Functionally, may be involved in a cell-to cell programmed cell death (PCD) signaling mechanism. The chain is EP1-like glycoprotein 3 from Arabidopsis thaliana (Mouse-ear cress).